Consider the following 99-residue polypeptide: Large ribosomal subunit protein eL21 (99 aa).

It belongs to the eukaryotic ribosomal protein eL21 family.

The sequence is that of Large ribosomal subunit protein eL21 from Ignicoccus hospitalis (strain KIN4/I / DSM 18386 / JCM 14125).